Here is a 144-residue protein sequence, read N- to C-terminus: Large ribosomal subunit protein uL15 (144 aa).

The interval 1-52 (MRLNSLSPAEGAKHSAKRLGRGIGSGLGKTGGRGHKGQKSRTGGGVRRGFEG) is disordered. The span at 21–31 (RGIGSGLGKTG) shows a compositional bias: gly residues.

This sequence belongs to the universal ribosomal protein uL15 family. Part of the 50S ribosomal subunit.

In terms of biological role, binds to the 23S rRNA. The protein is Large ribosomal subunit protein uL15 of Actinobacillus pleuropneumoniae serotype 5b (strain L20).